A 185-amino-acid polypeptide reads, in one-letter code: Ribosome-recycling factor (185 aa).

Residues 138–185 (ALKKQEKDGEITEDEERRLEKEVQKVTDESTKKIDQMADNKRKEIIQG) form a disordered region.

This sequence belongs to the RRF family.

It localises to the cytoplasm. In terms of biological role, responsible for the release of ribosomes from messenger RNA at the termination of protein biosynthesis. May increase the efficiency of translation by recycling ribosomes from one round of translation to another. This chain is Ribosome-recycling factor, found in Lactobacillus delbrueckii subsp. bulgaricus (strain ATCC BAA-365 / Lb-18).